Reading from the N-terminus, the 311-residue chain is Malate dehydrogenase (311 aa).

NAD(+)-binding positions include G7–G13 and D34. Residues R81 and R87 each contribute to the substrate site. Residues N94 and I117–N119 contribute to the NAD(+) site. Residues N119 and R153 each contribute to the substrate site. H177 acts as the Proton acceptor in catalysis. M227 lines the NAD(+) pocket.

It belongs to the LDH/MDH superfamily. MDH type 1 family. Homodimer.

It catalyses the reaction (S)-malate + NAD(+) = oxaloacetate + NADH + H(+). In terms of biological role, catalyzes the reversible oxidation of malate to oxaloacetate. This chain is Malate dehydrogenase, found in Shewanella baltica (strain OS223).